The chain runs to 296 residues: Enoyl-CoA hydratase AKT3-2 (296 aa).

Residues 294–296 (PKL) carry the Peroxisomal targeting signal type 1 motif.

The protein belongs to the enoyl-CoA hydratase/isomerase family.

It is found in the peroxisome. It catalyses the reaction a (3S)-3-hydroxyacyl-CoA = a (2E)-enoyl-CoA + H2O. It carries out the reaction a 4-saturated-(3S)-3-hydroxyacyl-CoA = a (3E)-enoyl-CoA + H2O. It participates in mycotoxin biosynthesis. Enoyl-CoA hydratase; part of the gene clusters that mediate the biosynthesis of the host-selective toxins (HSTs) AK-toxins responsible for Japanese pear black spot disease by the Japanese pear pathotype. AK-toxins are esters of 9,10-epoxy 8-hydroxy 9-methyldecatrienoic acid (EDA). On cellular level, AK-toxins affect plasma membrane of susceptible cells and cause a sudden increase in loss of K(+) after a few minutes of toxin treatment. The acyl-CoA ligase AKT1, the hydrolase AKT2 and enoyl-CoA hydratase AKT3 are all involved in the biosynthesis of the AK-, AF- and ACT-toxin common 9,10-epoxy-8-hydroxy-9-methyl-decatrienoic acid (EDA) structural moiety. Part of the EDA biosynthesis occurs in the peroxisome since these 3 enzymes are localized in peroxisomes. The exact roles of the 3 enzymes, as well as of additional AK-toxin clusters enzymes, including AKT4, AKT6 and AKTS1, have still to be elucidated. The Cytochrome P450 monooxygenase AKT7 on the other side functions to limit production of EDA and AK-toxin, probably via the catalysis of a side reaction of EDA or its precursor. This chain is Enoyl-CoA hydratase AKT3-2, found in Alternaria alternata (Alternaria rot fungus).